The chain runs to 510 residues: Mitochondrial metal transporter 1 (510 aa).

Residues 120–141 form a disordered region; that stretch reads ADKPSSLNLHSHTHSHGHTHSH. The span at 130-141 shows a compositional bias: basic residues; the sequence is SHTHSHGHTHSH. The next 6 helical transmembrane spans lie at 165–185, 194–214, 241–261, 286–306, 333–353, and 356–376; these read WVGLGVNVGIAIGKFFGGIVF, AIHAISDMVSDLLTLLSVGLA, LAMAGISIGWSSLCALVGPVI, VTDINAAWIAAASIAAKEWIF, LTSLVALVAISTGYLVNIQSL, and IGGLIVSGLIIKAGGEGMCIA.

This sequence belongs to the cation diffusion facilitator (CDF) transporter (TC 2.A.4) family. SLC30A subfamily.

The protein resides in the mitochondrion membrane. In terms of biological role, mitochondrial metal transporter involved in mitochondrial iron accumulation. In Saccharomyces cerevisiae (strain ATCC 204508 / S288c) (Baker's yeast), this protein is Mitochondrial metal transporter 1 (MMT1).